Consider the following 423-residue polypeptide: G2/mitotic-specific cyclin-B1 (423 aa).

Serine 116 is subject to Phosphoserine; by CDK1. Serine 118 is modified (phosphoserine). Position 123 is a phosphoserine; by PLK1 (serine 123). Serine 137 carries the post-translational modification Phosphoserine. 2 interaction with CDK2 regions span residues 159-167 (EYVKDIYAY) and 248-251 (YEEM). Threonine 311 is subject to Phosphothreonine.

It belongs to the cyclin family. Cyclin AB subfamily. In terms of assembly, interacts with the CDC2 protein kinase to form a serine/threonine kinase holoenzyme complex also known as maturation promoting factor (MPF). The cyclin subunit imparts substrate specificity to the complex. Binds HEI10. Interacts with catalytically active RALBP1 and CDC2 during mitosis to form an endocytotic complex during interphase. Interacts with CCNF; interaction is required for nuclear localization. Interacts with CDK5RAP3. Interacts with RFPL4A and UBE2A. Interacts with INCA1. Ubiquitinated by the SCF(NIPA) complex during interphase, leading to its destruction. Deubiquitinated by USP22 during G2/M phase. In terms of processing, phosphorylated by PLK1 at Ser-123 on centrosomes during prophase: phosphorylation by PLK1 does not cause nuclear import. Phosphorylation at Ser-137 was also reported to be mediated by PLK1 but Ser-123 seems to be the primary phosphorylation site.

The protein resides in the cytoplasm. The protein localises to the nucleus. It localises to the cytoskeleton. It is found in the microtubule organizing center. Its subcellular location is the centrosome. Functionally, essential for the control of the cell cycle at the G2/M (mitosis) transition. The polypeptide is G2/mitotic-specific cyclin-B1 (Ccnb1) (Rattus norvegicus (Rat)).